A 637-amino-acid polypeptide reads, in one-letter code: Glutathione hydrolase 3 (637 aa).

A helical membrane pass occupies residues 28-48 (LKISLLLLLILLATSGYYSFS). Residue N50 is glycosylated (N-linked (GlcNAc...) asparagine). Residue R147 coordinates L-glutamate. N-linked (GlcNAc...) asparagine glycosylation is found at N271, N374, and N398. Catalysis depends on T418, which acts as the Nucleophile. L-glutamate contacts are provided by residues T436, N438, E457, D460, 488–489 (SS), and 509–510 (GG). An N-linked (GlcNAc...) asparagine glycan is attached at N553.

Belongs to the gamma-glutamyltransferase family. As to expression, expressed in roots, cotyledons, leaves, flowers and siliques.

It localises to the vacuole membrane. The enzyme catalyses an N-terminal (5-L-glutamyl)-[peptide] + an alpha-amino acid = 5-L-glutamyl amino acid + an N-terminal L-alpha-aminoacyl-[peptide]. It carries out the reaction glutathione + H2O = L-cysteinylglycine + L-glutamate. The catalysed reaction is an S-substituted glutathione + H2O = an S-substituted L-cysteinylglycine + L-glutamate. The protein operates within sulfur metabolism; glutathione metabolism. In terms of biological role, may play a role in protecting plants from some xenobiotic chemicals by degrading vacuolar glutathione conjugates into cysteine conjugates. This chain is Glutathione hydrolase 3 (GGT3), found in Arabidopsis thaliana (Mouse-ear cress).